Reading from the N-terminus, the 121-residue chain is Large ribosomal subunit protein bL12 (121 aa).

This sequence belongs to the bacterial ribosomal protein bL12 family. Homodimer. Part of the ribosomal stalk of the 50S ribosomal subunit. Forms a multimeric L10(L12)X complex, where L10 forms an elongated spine to which 2 to 4 L12 dimers bind in a sequential fashion. Binds GTP-bound translation factors.

Forms part of the ribosomal stalk which helps the ribosome interact with GTP-bound translation factors. Is thus essential for accurate translation. This is Large ribosomal subunit protein bL12 from Serratia proteamaculans (strain 568).